A 134-amino-acid polypeptide reads, in one-letter code: Phosphoribosyl-AMP cyclohydrolase (134 aa).

D77 is a binding site for Mg(2+). Residue C78 coordinates Zn(2+). 2 residues coordinate Mg(2+): D79 and D81. Zn(2+) contacts are provided by C95 and C102.

This sequence belongs to the PRA-CH family. Homodimer. The cofactor is Mg(2+). Zn(2+) is required as a cofactor.

The protein resides in the cytoplasm. The catalysed reaction is 1-(5-phospho-beta-D-ribosyl)-5'-AMP + H2O = 1-(5-phospho-beta-D-ribosyl)-5-[(5-phospho-beta-D-ribosylamino)methylideneamino]imidazole-4-carboxamide. It participates in amino-acid biosynthesis; L-histidine biosynthesis; L-histidine from 5-phospho-alpha-D-ribose 1-diphosphate: step 3/9. Functionally, catalyzes the hydrolysis of the adenine ring of phosphoribosyl-AMP. This Pseudomonas aeruginosa (strain LESB58) protein is Phosphoribosyl-AMP cyclohydrolase.